We begin with the raw amino-acid sequence, 88 residues long: Small ribosomal subunit protein uS15 (88 aa).

This sequence belongs to the universal ribosomal protein uS15 family. Part of the 30S ribosomal subunit. Forms a bridge to the 50S subunit in the 70S ribosome, contacting the 23S rRNA.

In terms of biological role, one of the primary rRNA binding proteins, it binds directly to 16S rRNA where it helps nucleate assembly of the platform of the 30S subunit by binding and bridging several RNA helices of the 16S rRNA. Its function is as follows. Forms an intersubunit bridge (bridge B4) with the 23S rRNA of the 50S subunit in the ribosome. This is Small ribosomal subunit protein uS15 from Borrelia hermsii (strain HS1 / DAH).